The sequence spans 92 residues: Small ribosomal subunit protein uS19c (92 aa).

It belongs to the universal ribosomal protein uS19 family.

It is found in the plastid. The protein resides in the chloroplast. Its function is as follows. Protein S19 forms a complex with S13 that binds strongly to the 16S ribosomal RNA. This Gossypium barbadense (Sea Island cotton) protein is Small ribosomal subunit protein uS19c.